The chain runs to 176 residues: ATP-dependent protease subunit HslV (176 aa).

Threonine 2 is an active-site residue. Na(+)-binding residues include glycine 157, cysteine 160, and threonine 163.

The protein belongs to the peptidase T1B family. HslV subfamily. As to quaternary structure, a double ring-shaped homohexamer of HslV is capped on each side by a ring-shaped HslU homohexamer. The assembly of the HslU/HslV complex is dependent on binding of ATP.

Its subcellular location is the cytoplasm. It catalyses the reaction ATP-dependent cleavage of peptide bonds with broad specificity.. Allosterically activated by HslU binding. Functionally, protease subunit of a proteasome-like degradation complex believed to be a general protein degrading machinery. The sequence is that of ATP-dependent protease subunit HslV from Pectobacterium carotovorum subsp. carotovorum (strain PC1).